We begin with the raw amino-acid sequence, 1491 residues long: Pleckstrin homology domain-containing family H member 2 (1491 aa).

The stretch at 19 to 177 forms a coiled coil; it reads ALEAQLMKFR…ELQEKKISCV (159 aa). 3 disordered regions span residues 232-435, 506-546, and 612-668; these read AEKP…PFQP, DDGL…LHRF, and SSSP…SDYA. A compositionally biased stretch (polar residues) spans 253-264; that stretch reads TSCSSEQNQKTR. Over residues 374–385 the composition is skewed to basic and acidic residues; the sequence is KEQDSSSDELNK. Residues 392-406 show a composition bias toward polar residues; it reads LDYTSSSSEANTPSP. The span at 657–666 shows a compositional bias: low complexity; it reads SDSSAASESD. PH domains follow at residues 702 to 796 and 810 to 918; these read PLEK…SVLR and KPAV…VAAG. In terms of domain architecture, MyTH4 spans 954–1109; it reads HSKEGILSPL…PSRMEILSTL (156 aa). An FERM domain is found at 1120 to 1449; it reads FSIPVHFMNG…SYINSFHQQK (330 aa). Residues 1466–1491 are disordered; it reads QAPQARVMGSQPPLSNSRPTKGPTLL.

Self-associates. Interacts with TGFB1I1. In terms of tissue distribution, expressed in the kidney and testis. Expressed in the kidney exclusively by glomerular podocytes.

It is found in the cytoplasm. Its subcellular location is the cytoskeleton. It localises to the cell membrane. The protein resides in the cell projection. The protein localises to the lamellipodium. Its function is as follows. In the kidney glomerulus may play a role in linking podocyte foot processes to the glomerular basement membrane. May be involved in stabilization of F-actin by attenuating its depolymerization. Can recruit TGFB1I1 from focal adhesions to podocyte lamellipodia. This Mus musculus (Mouse) protein is Pleckstrin homology domain-containing family H member 2 (Plekhh2).